The following is a 388-amino-acid chain: P2X purinoceptor 4 (388 aa).

Residues 1 to 33 (MAGCCSVLGSFLFEYDTPRIVLIRSRKVGLMNR) are Cytoplasmic-facing. A helical transmembrane segment spans residues 34–54 (AVQLLILAYVIGWVFVWEKGY). Residues 55–338 (QETDSVVSSV…KFDIIPTMIN (284 aa)) lie on the Extracellular side of the membrane. Residues Lys67 and Lys69 each coordinate ATP. CTP contacts are provided by Lys67 and Lys69. N-linked (GlcNAc...) asparagine glycosylation is found at Asn75 and Asn110. 3 disulfide bridges follow: Cys116/Cys165, Cys126/Cys149, and Cys132/Cys159. N-linked (GlcNAc...) asparagine glycans are attached at residues Asn153 and Asn184. ATP-binding residues include Thr186 and Leu188. Thr186 serves as a coordination point for CTP. Asn199 and Asn208 each carry an N-linked (GlcNAc...) asparagine glycan. Cystine bridges form between Cys217-Cys227 and Cys261-Cys270. Positions 293, 295, and 313 each coordinate ATP. CTP-binding residues include Asn293, Arg295, and Lys313. The helical transmembrane segment at 339 to 359 (VGSGLALLGVATVLCDVIVLY) threads the bilayer. Over 360–388 (CMKKKYYYRDKKYKYVEDYEQGLSGEMNQ) the chain is Cytoplasmic.

It belongs to the P2X receptor family. In terms of assembly, functional P2RXs are organized as homomeric and heteromeric trimers. Forms heterotrimer with P2RX1. Interacts with P2RX7 (via C-terminus); this interaction is functional only in the presence of ATP. Forms heterotrimer with P2RX4; functional differences between homomeric P2RX4 and P2RX4/6 heterotrimer are minor. Interacts with AP1M2. Widespread distribution in the brain. Strongly expressed in microglial cells. Also expressed in epithelial cells.

It is found in the cell membrane. Its subcellular location is the lysosome membrane. The enzyme catalyses K(+)(in) = K(+)(out). It carries out the reaction Na(+)(in) = Na(+)(out). It catalyses the reaction Ca(2+)(in) = Ca(2+)(out). Its activity is regulated as follows. Activated by ATP. pH-dependent and inhibited by acidic pH. In terms of biological role, ATP-gated nonselective transmembrane cation channel permeable to potassium, sodium and calcium. CTP, but not GTP or UTP, functions as a weak affinity agonist for P2RX4. Activated by extracellularly released ATP, it plays multiple role in immunity and central nervous system physiology. Plays a key role in initial steps of T-cell activation and Ca(2+) microdomain formation. Also participates in basal T-cell activity without TCR/CD3 stimulation. Promotes the differentiation and activation of Th17 cells via expression of retinoic acid-related orphan receptor C/RORC. Upon activation, drives microglia motility via the PI3K/Akt pathway. Could also function as an ATP-gated cation channel of lysosomal membranes. The sequence is that of P2X purinoceptor 4 (P2rx4) from Rattus norvegicus (Rat).